The primary structure comprises 133 residues: Transmembrane protein 60 (133 aa).

4 helical membrane-spanning segments follow: residues 5 to 25, 35 to 55, 78 to 98, and 110 to 130; these read LAQRVLLTWLFTLLFLIMLVL, WFLIFIPVWIFDTILLVMLIV, AWYLIAMLLKLAFCLALCAKL, and FIPLWALLAGALTELGYNVFF.

It localises to the membrane. The protein is Transmembrane protein 60 (Tmem60) of Mus musculus (Mouse).